The primary structure comprises 447 residues: Asparagine--tRNA ligase (447 aa).

This sequence belongs to the class-II aminoacyl-tRNA synthetase family. In terms of assembly, homodimer.

The protein resides in the cytoplasm. It catalyses the reaction tRNA(Asn) + L-asparagine + ATP = L-asparaginyl-tRNA(Asn) + AMP + diphosphate + H(+). The sequence is that of Asparagine--tRNA ligase from Herpetosiphon aurantiacus (strain ATCC 23779 / DSM 785 / 114-95).